The primary structure comprises 235 residues: Pyridoxine/pyridoxamine 5'-phosphate oxidase (235 aa).

Substrate-binding positions include 30–33 (RQEY) and Lys-88. Residues 83–88 (RTVLLK), 98–99 (YT), Arg-104, Lys-105, and Gln-127 each bind FMN. Residues Tyr-145, Arg-149, and Ser-153 each coordinate substrate. FMN contacts are provided by residues 162 to 163 (QS) and Trp-207. 213-215 (RLH) lines the substrate pocket. Arg-217 serves as a coordination point for FMN.

It belongs to the pyridoxamine 5'-phosphate oxidase family. As to quaternary structure, homodimer. The cofactor is FMN.

It carries out the reaction pyridoxamine 5'-phosphate + O2 + H2O = pyridoxal 5'-phosphate + H2O2 + NH4(+). It catalyses the reaction pyridoxine 5'-phosphate + O2 = pyridoxal 5'-phosphate + H2O2. Its pathway is cofactor metabolism; pyridoxal 5'-phosphate salvage; pyridoxal 5'-phosphate from pyridoxamine 5'-phosphate: step 1/1. It functions in the pathway cofactor metabolism; pyridoxal 5'-phosphate salvage; pyridoxal 5'-phosphate from pyridoxine 5'-phosphate: step 1/1. Functionally, catalyzes the oxidation of either pyridoxine 5'-phosphate (PNP) or pyridoxamine 5'-phosphate (PMP) into pyridoxal 5'-phosphate (PLP). This Bacteroides fragilis (strain YCH46) protein is Pyridoxine/pyridoxamine 5'-phosphate oxidase.